The primary structure comprises 835 residues: Protein translocase subunit SecA (835 aa).

ATP-binding positions include Q85, 103 to 107 (GEGKT), and D492. The disordered stretch occupies residues 788-807 (VQGEAVHPSSDGEEAKKKPV). Zn(2+) is bound by residues C819, C821, C830, and C831.

It belongs to the SecA family. Monomer and homodimer. Part of the essential Sec protein translocation apparatus which comprises SecA, SecYEG and auxiliary proteins SecDF. Other proteins may also be involved. The cofactor is Zn(2+).

The protein resides in the cell membrane. It is found in the cytoplasm. The enzyme catalyses ATP + H2O + cellular proteinSide 1 = ADP + phosphate + cellular proteinSide 2.. Part of the Sec protein translocase complex. Interacts with the SecYEG preprotein conducting channel. Has a central role in coupling the hydrolysis of ATP to the transfer of proteins into and across the cell membrane, serving as an ATP-driven molecular motor driving the stepwise translocation of polypeptide chains across the membrane. In Bacillus cereus (strain G9842), this protein is Protein translocase subunit SecA.